Reading from the N-terminus, the 475-residue chain is Bifunctional protein HldE (475 aa).

The segment at 1-318 (MKITLPEFGK…ANALYTEQET (318 aa)) is ribokinase. Residue 195-198 (NMSE) coordinates ATP. Aspartate 264 is an active-site residue. The tract at residues 344–475 (MTNGCFDILH…DIIKTIRERG (132 aa)) is cytidylyltransferase.

The protein in the N-terminal section; belongs to the carbohydrate kinase PfkB family. It in the C-terminal section; belongs to the cytidylyltransferase family. In terms of assembly, homodimer.

The enzyme catalyses D-glycero-beta-D-manno-heptose 7-phosphate + ATP = D-glycero-beta-D-manno-heptose 1,7-bisphosphate + ADP + H(+). It catalyses the reaction D-glycero-beta-D-manno-heptose 1-phosphate + ATP + H(+) = ADP-D-glycero-beta-D-manno-heptose + diphosphate. Its pathway is nucleotide-sugar biosynthesis; ADP-L-glycero-beta-D-manno-heptose biosynthesis; ADP-L-glycero-beta-D-manno-heptose from D-glycero-beta-D-manno-heptose 7-phosphate: step 1/4. The protein operates within nucleotide-sugar biosynthesis; ADP-L-glycero-beta-D-manno-heptose biosynthesis; ADP-L-glycero-beta-D-manno-heptose from D-glycero-beta-D-manno-heptose 7-phosphate: step 3/4. In terms of biological role, catalyzes the phosphorylation of D-glycero-D-manno-heptose 7-phosphate at the C-1 position to selectively form D-glycero-beta-D-manno-heptose-1,7-bisphosphate. Functionally, catalyzes the ADP transfer from ATP to D-glycero-beta-D-manno-heptose 1-phosphate, yielding ADP-D-glycero-beta-D-manno-heptose. In Aeromonas salmonicida (strain A449), this protein is Bifunctional protein HldE.